Reading from the N-terminus, the 438-residue chain is MTSEWSSPASPEGSNDSGGSEALDKPIDNDAEGVWSPDIEQSFQEALAIYPPCGRRKIILSDEGKMYGRNELIARYIKLRTGKTRTRKQVSSHIQVLARRKAREIQAKLKKTQVDKYDFSSEKDQTAKDKAMQSIATMSSAQIISATAFHSKMALPGLPRSAYPAVSGFWQGALPGQAGSSQDVKPFTQQPYALQPSLPLPGFDSPTGLPPSSSTPAWQGRRVASSKLWMLEFSAFLEQQQDQDTYNKHLFVHIGQSNPSYSDPYLEAVDIRQIYDKFPEKKGGLKELFERGPANAFFLVKFWADLNTNIEDESRSFYGVSSQYESPENMVITCSTKVCSFGKQVVEKVETEYAHYENGHYAYRIHRSPLCEYMINFIHKLKHLPEKYMMNSVLENFTILQVVTNRDTQETLLCIAYVFEVSASDHGAQHHIYRLVKD.

Residues 1 to 18 show a composition bias toward polar residues; that stretch reads MTSEWSSPASPEGSNDSG. 2 disordered regions span residues 1-36 and 195-217; these read MTSE…GVWS and QPSL…STPA. Positions 28-104 form a DNA-binding region, TEA; sequence DNDAEGVWSP…QVLARRKARE (77 aa). Positions 205–216 are enriched in low complexity; sequence SPTGLPPSSSTP.

As to expression, enriched in cardiac and skeletal muscle.

Its subcellular location is the nucleus. In terms of biological role, transcription factor which plays a key role in the Hippo signaling pathway, a pathway involved in organ size control and tumor suppression by restricting proliferation and promoting apoptosis. The core of this pathway is composed of a kinase cascade wherein MST1/MST2, in complex with its regulatory protein SAV1, phosphorylates and activates LATS1/2 in complex with its regulatory protein MOB1, which in turn phosphorylates and inactivates YAP1 oncoprotein and WWTR1/TAZ. Binds m-cat elements from muscle-specific promoters and differentially activate transcription. Isoform B has probably a transactivation capacity that is lacking in the other isoforms. Isoform D may be defective in DNA binding. The polypeptide is Transcriptional enhancer factor TEF-3 (TEAD4) (Gallus gallus (Chicken)).